The primary structure comprises 500 residues: MKCTAREWLRVTTVLFMARAIPAMVVPNATLLEKLLEKYMDEDGEWWIAKQRGKRAITDNDMQSILDLHNKLRSQVYPTASNMEYMTWDVELERSAESWAESCLWEHGPASLLPSIGQNLGAHWGRYRPPTFHVQSWYDEVKDFSYPYEHECNPYCPFRCSGPVCTHYTQVVWATSNRIGCAINLCHNMNIWGQIWPKAVYLVCNYSPKGNWWGHAPYKHGRPCSACPPSFGGGCRENLCYKEGSDRYYPPREEETNEIERQQSQVHDTHVRTRSDDSSRNEVISAQQMSQIVSCEVRLRDQCKGTTCNRYECPAGCLDSKAKVIGSVHYEMQSSICRAAIHYGIIDNDGGWVDITRQGRKHYFIKSNRNGIQTIGKYQSANSFTVSKVTVQAVTCETTVEQLCPFHKPASHCPRVYCPRNCMQANPHYARVIGTRVYSDLSSICRAAVHAGVVRNHGGYVDVMPVDKRKTYIASFQNGIFSESLQNPPGGKAFRVFAVV.

The first 23 residues, 1–23 (MKCTAREWLRVTTVLFMARAIPA), serve as a signal peptide directing secretion. In terms of domain architecture, SCP spans 66-206 (LDLHNKLRSQ…PKAVYLVCNY (141 aa)). Basic and acidic residues predominate over residues 254–280 (EETNEIERQQSQVHDTHVRTRSDDSSR). The segment at 254-281 (EETNEIERQQSQVHDTHVRTRSDDSSRN) is disordered. LCCL domains are found at residues 289-384 (MSQI…ANSF) and 390-492 (TVQA…PGGK). 4 disulfides stabilise this stretch: C295-C313, C317-C337, C396-C418, and C422-C445.

The protein belongs to the CRISP family.

It localises to the secreted. The protein is Cysteine-rich secretory protein LCCL domain-containing 1 (CRISPLD1) of Homo sapiens (Human).